A 1323-amino-acid polypeptide reads, in one-letter code: MEDGGLTAFEEDQRCLSQSLPLPVSAEGPAAQTTAEPSRSFSSAHRHLSRRNGLSRLCQSRTALSEDRWSSYCLSSLAAQNICTSKLHCPAAPEHTDPSEPRGSVSCCSLLRGLSSGWSSPLLPAPVCNPNKAIFTVDAKTTEILVANDKACGLLGYSSQDLIGQKLTQFFLRSDSDVVEALSEEHMEADGHAAVVFGTVVDIISRSGEKIPVSVWMKRMRQERRLCCVVVLEPVERVSTWVAFQSDGTVTSCDSLFAHLHGYVSGEDVAGQHITDLIPSVQLPPSGQHIPKNLKIQRSVGRARDGTTFPLSLKLKSQPSSEEATTGEAAPVSGYRASVWVFCTISGLITLLPDGTIHGINHSFALTLFGYGKTELLGKNITFLIPGFYSYMDLAYNSSLQLPDLASCLDVGNESGCGERTLDPWQGQDPAEGGQDPRINVVLAGGHVVPRDEIRKLMESQDIFTGTQTELIAGGQLLSCLSPQPAPGVDNVPEGSLPVHGEQALPKDQQITALGREEPVAIESPGQDLLGESRSEPVDVKPFASCEDSEAPVPAEDGGSDAGMCGLCQKAQLERMGVSGPSGSDLWAGAAVAKPQAKGQLAGGSLLMHCPCYGSEWGLWWRSQDLAPSPSGMAGLSFGTPTLDEPWLGVENDREELQTCLIKEQLSQLSLAGALDVPHAELVPTECQAVTAPVSSCDLGGRDLCGGCTGSSSACYALATDLPGGLEAVEAQEVDVNSFSWNLKELFFSDQTDQTSSNCSCATSELRETPSSLAVGSDPDVGSLQEQGSCVLDDRELLLLTGTCVDLGQGRRFRESCVGHDPTEPLEVCLVSSEHYAASDRESPGHVPSTLDAGPEDTCPSAEEPRLNVQVTSTPVIVMRGAAGLQREIQEGAYSGSCYHRDGLRLSIQFEVRRVELQGPTPLFCCWLVKDLLHSQRDSAARTRLFLASLPGSTHSTAAELTGPSLVEVLRARPWFEEPPKAVELEGLAACEGEYSQKYSTMSPLGSGAFGFVWTAVDKEKNKEVVVKFIKKEKVLEDCWIEDPKLGKVTLEIAILSRVEHANIIKVLDIFENQGFFQLVMEKHGSGLDLFAFIDRHPRLDEPLASYIFRQLVSAVGYLRLKDIIHRDIKDENIVIAEDFTIKLIDFGSAAYLERGKLFYTFCGTIEYCAPEVLMGNPYRGPELEMWSLGVTLYTLVFEENPFCELEETVEAAIHPPYLVSKELMSLVSGLLQPVPERRTTLEKLVTDPWVTQPVNLADYTWEEVFRVNKPESGVLSAASLEMGNRSLSDVAQAQELCGGPVPGEAPNGQGCLHPGDPRLLTS.

An N-acetylmethionine modification is found at methionine 1. Serine 19 carries the post-translational modification Phosphoserine. Residues 20 to 47 (LPLPVSAEGPAAQTTAEPSRSFSSAHRH) are disordered. Residues 31–43 (AQTTAEPSRSFSS) are compositionally biased toward polar residues. At threonine 34 the chain carries Phosphothreonine. PAS domains follow at residues 119 to 190 (SSPL…MEAD) and 335 to 402 (YRAS…SLQL). Serine 582 is modified (phosphoserine). The disordered stretch occupies residues 837–857 (AASDRESPGHVPSTLDAGPED). The residue at position 939 (serine 939) is a Phosphoserine. The Protein kinase domain maps to 999-1251 (YSTMSPLGSG…LEKLVTDPWV (253 aa)). ATP is bound by residues 1005 to 1013 (LGSGAFGFV), lysine 1028, and 1082 to 1089 (EKHGSGLD). The Proton acceptor role is filled by aspartate 1128. ATP is bound at residue aspartate 1146. A phosphothreonine; by autocatalysis mark is found at threonine 1161 and threonine 1165. A disordered region spans residues 1298–1323 (CGGPVPGEAPNGQGCLHPGDPRLLTS).

This sequence belongs to the protein kinase superfamily. CAMK Ser/Thr protein kinase family. Post-translationally, autophosphorylated on Thr-1161 and Thr-1165. Autophosphorylation is activated by phospholipids. As to expression, ubiquitously expressed, with slightly higher expression in brain, prostate and testis. Reduced expression was found in placenta. Present in germ cells of testis and in the midpiece of sperm tails (at protein level).

Its subcellular location is the cytoplasm. It localises to the nucleus. It carries out the reaction L-seryl-[protein] + ATP = O-phospho-L-seryl-[protein] + ADP + H(+). It catalyses the reaction L-threonyl-[protein] + ATP = O-phospho-L-threonyl-[protein] + ADP + H(+). With respect to regulation, protein kinase activity is inhibited by the first PAS domain: binding of an unidentified ligand desinhibits the protein kinase activity. May be activated by autophosphorylation on Thr-1161 and Thr-1165. The activating role of autophosphorylation at Thr-1161 is unclear: according to a report, autophosphorylation at Thr-1161 does not play a major role in activation. Autophosphorylation is enhanced upon phosphatidylinositol monophosphate (phosphatidylinositol 4-phosphate) binding and inhibited upon phosphatidylinositol bi- and tri-phosphate binding. In contrast, phosphorylation of target proteins is inhibited upon all phosphatidylinositol-binding (phosphatidylinositol mono- bi- and tri-phosphate). Its function is as follows. Serine/threonine-protein kinase involved in energy homeostasis and protein translation. Phosphorylates EEF1A1, GYS1, PDX1 and RPS6. Probably plays a role under changing environmental conditions (oxygen, glucose, nutrition), rather than under standard conditions. Acts as a sensor involved in energy homeostasis: regulates glycogen synthase synthesis by mediating phosphorylation of GYS1, leading to GYS1 inactivation. May be involved in glucose-stimulated insulin production in pancreas and regulation of glucagon secretion by glucose in alpha cells; however such data require additional evidences. May play a role in regulation of protein translation by phosphorylating EEF1A1, leading to increase translation efficiency. May also participate in respiratory regulation. In Homo sapiens (Human), this protein is PAS domain-containing serine/threonine-protein kinase (PASK).